Consider the following 356-residue polypeptide: Phosphoribosylformylglycinamidine cyclo-ligase (356 aa).

This sequence belongs to the AIR synthase family.

Its subcellular location is the cytoplasm. It catalyses the reaction 2-formamido-N(1)-(5-O-phospho-beta-D-ribosyl)acetamidine + ATP = 5-amino-1-(5-phospho-beta-D-ribosyl)imidazole + ADP + phosphate + H(+). The protein operates within purine metabolism; IMP biosynthesis via de novo pathway; 5-amino-1-(5-phospho-D-ribosyl)imidazole from N(2)-formyl-N(1)-(5-phospho-D-ribosyl)glycinamide: step 2/2. The polypeptide is Phosphoribosylformylglycinamidine cyclo-ligase (Rhizobium meliloti (strain 1021) (Ensifer meliloti)).